The following is a 135-amino-acid chain: Small ribosomal subunit protein bS6 (135 aa).

Residues 104–135 are disordered; the sequence is FSRLDRNGHIGHDEKHPRSPSRQREDVIEGVE.

This sequence belongs to the bacterial ribosomal protein bS6 family.

Its function is as follows. Binds together with bS18 to 16S ribosomal RNA. This chain is Small ribosomal subunit protein bS6, found in Bartonella henselae (strain ATCC 49882 / DSM 28221 / CCUG 30454 / Houston 1) (Rochalimaea henselae).